We begin with the raw amino-acid sequence, 193 residues long: Holliday junction branch migration complex subunit RuvA (193 aa).

Residues 1–64 are domain I; that stretch reads MIGRIAGILL…EDAHLLYGFL (64 aa). The interval 65–139 is domain II; sequence TPQERTTFRE…GKLGADLGAL (75 aa). A flexible linker region spans residues 139–143; the sequence is LAGAA. Residues 144-193 form a domain III region; sequence SPSDHAADILNALVALGYSEKEGLAAIKNVPAGTGVSDGIKLALKALSKA.

This sequence belongs to the RuvA family. As to quaternary structure, homotetramer. Forms an RuvA(8)-RuvB(12)-Holliday junction (HJ) complex. HJ DNA is sandwiched between 2 RuvA tetramers; dsDNA enters through RuvA and exits via RuvB. An RuvB hexamer assembles on each DNA strand where it exits the tetramer. Each RuvB hexamer is contacted by two RuvA subunits (via domain III) on 2 adjacent RuvB subunits; this complex drives branch migration. In the full resolvosome a probable DNA-RuvA(4)-RuvB(12)-RuvC(2) complex forms which resolves the HJ.

The protein resides in the cytoplasm. In terms of biological role, the RuvA-RuvB-RuvC complex processes Holliday junction (HJ) DNA during genetic recombination and DNA repair, while the RuvA-RuvB complex plays an important role in the rescue of blocked DNA replication forks via replication fork reversal (RFR). RuvA specifically binds to HJ cruciform DNA, conferring on it an open structure. The RuvB hexamer acts as an ATP-dependent pump, pulling dsDNA into and through the RuvAB complex. HJ branch migration allows RuvC to scan DNA until it finds its consensus sequence, where it cleaves and resolves the cruciform DNA. In Burkholderia vietnamiensis (strain G4 / LMG 22486) (Burkholderia cepacia (strain R1808)), this protein is Holliday junction branch migration complex subunit RuvA.